The primary structure comprises 401 residues: Probable cysteine desulfurase (401 aa).

K216 carries the N6-(pyridoxal phosphate)lysine modification.

This sequence belongs to the class-V pyridoxal-phosphate-dependent aminotransferase family. Csd subfamily. Pyridoxal 5'-phosphate serves as cofactor.

The catalysed reaction is (sulfur carrier)-H + L-cysteine = (sulfur carrier)-SH + L-alanine. In Pyrococcus abyssi (strain GE5 / Orsay), this protein is Probable cysteine desulfurase (csd).